A 334-amino-acid polypeptide reads, in one-letter code: Adenine deaminase (334 aa).

Residues histidine 17, histidine 19, and histidine 197 each contribute to the Zn(2+) site. Glutamate 200 functions as the Proton donor in the catalytic mechanism. Aspartate 278 contacts Zn(2+). A substrate-binding site is contributed by aspartate 279.

This sequence belongs to the metallo-dependent hydrolases superfamily. Adenosine and AMP deaminases family. Adenine deaminase type 2 subfamily. Zn(2+) is required as a cofactor.

The catalysed reaction is adenine + H2O + H(+) = hypoxanthine + NH4(+). Its function is as follows. Catalyzes the hydrolytic deamination of adenine to hypoxanthine. Plays an important role in the purine salvage pathway and in nitrogen catabolism. The protein is Adenine deaminase of Rhodospirillum rubrum (strain ATCC 11170 / ATH 1.1.1 / DSM 467 / LMG 4362 / NCIMB 8255 / S1).